We begin with the raw amino-acid sequence, 1738 residues long: MLKRKQSSRVEAQPVTDFGPDESLSDNADILWINKPWVHSLLRICAIISVISVCMNTPMTFEHYPPLQYVTFTLDTLLMFLYTAEMIAKMHIRGIVKGDSSYVKDRWCVFDGFMVFCLWVSLVLQVFEIADIVDQMSPWGMLRIPRPLIMIRAFRIYFRFELPRTRITNILKRSGEQIWSVSIFLLFFLLLYGILGVQMFGTFTYHCVVNDTKPGNVTWNSLAIPDTHCSPELEEGYQCPPGFKCMDLEDLGLSRQELGYSGFNEIGTSIFTVYEAASQEGWVFLMYRAIDSFPRWRSYFYFITLIFFLAWLVKNVFIAVIIETFAEIRVQFQQMWGSRSSTTSTATTQMFHEDAAGGWQLVAVDVNKPQGRAPACLQKMMRSSVFHMFILSMVTVDVIVAASNYYKGENFRRQYDEFYLAEVAFTVLFDLEALLKIWCLGFTGYISSSLHKFELLLVIGTTLHVYPDLYHSQFTYFQVLRVVRLIKISPALEDFVYKIFGPGKKLGSLVVFTASLLIVMSAISLQMFCFVEELDRFTTFPRAFMSMFQILTQEGWVDVMDQTLNAVGHMWAPVVAIYFILYHLFATLILLSLFVAVILDNLELDEDLKKLKQLKQSEANADTKEKLPLRLRIFEKFPNRPQMVKISKLPSDFTVPKIRESFMKQFIDRQQQDTCCLLRSLPTTSSSSCDHSKRSAIEDNKYIDQKLRKSVFSIRARNLLEKETAVTKILRACTRQRMLSGSFEGQPAKERSILSVQHHIRQERRSLRHGSNSQRISRGKSLETLTQDHSNTVRYRNAQREDSEIKMIQEKKEQAEMKRKVQEEELRENHPYFDKPLFIVGREHRFRNFCRVVVRARFNASKTDPVTGAVKNTKYHQLYDLLGLVTYLDWVMIIVTICSCISMMFESPFRRVMHAPTLQIAEYVFVIFMSIELNLKIMADGLFFTPTAVIRDFGGVMDIFIYLVSLIFLCWMPQNVPAESGAQLLMVLRCLRPLRIFKLVPQMRKVVRELFSGFKEIFLVSILLLTLMLVFASFGVQLFAGKLAKCNDPNIIRREDCNGIFRINVSVSKNLNLKLRPGEKKPGFWVPRVWANPRNFNFDNVGNAMLALFEVLSLKGWVEVRDVIIHRVGPIHGIYIHVFVFLGCMIGLTLFVGVVIANFNENKGTALLTVDQRRWEDLKSRLKIAQPLHLPPRPDNDGFRAKMYDITQHPFFKRTIALLVLAQSVLLSVKWDVEDPVTVPLATMSVVFTFIFVLEVTMKIIAMSPAGFWQSRRNRYDLLVTSLGVVWVVLHFALLNAYTYMMGACVIVFRFFSICGKHVTLKMLLLTVVVSMYKSFFIIVGMFLLLLCYAFAGVVLFGTVKYGENINRHANFSSAGKAITVLFRIVTGEDWNKIMHDCMVQPPFCTPDEFTYWATDCGNYAGALMYFCSFYVIIAYIMLNLLVAIIVENFSLFYSTEEDQLLSYNDLRHFQIIWNMVDDKREGVIPTFRVKFLLRLLRGRLEVDLDKDKLLFKHMCYEMERLHNGGDVTFHDVLSMLSYRSVDIRKSLQLEELLAREQLEYTIEEEVAKQTIRMWLKKCLKRIRAKQQQSCSIIHSLRESQQQELSRFLNPPSIETTQPSEDTNANSQDNSMQPETSSQQQLLSPTLSDRGGSRQDAADAGKPQRKFGQWRLPSAPKPISHSVSSVNLRFGGRTTMKSVVCKMNPMTDAASCGSEVKKWWTRQLTVESDESGDDLLDI.

The Cytoplasmic segment spans residues 1 to 36 (MLKRKQSSRVEAQPVTDFGPDESLSDNADILWINKP). A helical membrane pass occupies residues 37–57 (WVHSLLRICAIISVISVCMNT). Over 58-65 (PMTFEHYP) the chain is Extracellular. A helical membrane pass occupies residues 66 to 90 (PLQYVTFTLDTLLMFLYTAEMIAKM). The Cytoplasmic portion of the chain corresponds to 91 to 106 (HIRGIVKGDSSYVKDR). Residues 107–129 (WCVFDGFMVFCLWVSLVLQVFEI) traverse the membrane as a helical segment. Residues 130 to 137 (ADIVDQMS) lie on the Extracellular side of the membrane. Residues 138-158 (PWGMLRIPRPLIMIRAFRIYF) traverse the membrane as a helical; Voltage-sensor segment. Topologically, residues 159-173 (RFELPRTRITNILKR) are cytoplasmic. The helical transmembrane segment at 174 to 199 (SGEQIWSVSIFLLFFLLLYGILGVQM) threads the bilayer. The Extracellular segment spans residues 200–269 (FGTFTYHCVV…YSGFNEIGTS (70 aa)). Disulfide bonds link C207–C239 and C229–C245. Residues N210 and N216 are each glycosylated (N-linked (GlcNAc...) asparagine). Residues 270–289 (IFTVYEAASQEGWVFLMYRA) constitute an intramembrane region (pore-forming). At 290-294 (IDSFP) the chain is on the extracellular side. The chain crosses the membrane as a helical span at residues 295–322 (RWRSYFYFITLIFFLAWLVKNVFIAVII). At 323–382 (ETFAEIRVQFQQMWGSRSSTTSTATTQMFHEDAAGGWQLVAVDVNKPQGRAPACLQKMMR) the chain is on the cytoplasmic side. The chain crosses the membrane as a helical span at residues 383-403 (SSVFHMFILSMVTVDVIVAAS). Residues 404-416 (NYYKGENFRRQYD) lie on the Extracellular side of the membrane. A helical transmembrane segment spans residues 417–439 (EFYLAEVAFTVLFDLEALLKIWC). Topologically, residues 440–447 (LGFTGYIS) are cytoplasmic. A helical transmembrane segment spans residues 448-468 (SSLHKFELLLVIGTTLHVYPD). The Extracellular portion of the chain corresponds to 469–472 (LYHS). The chain crosses the membrane as a helical; Voltage-sensor span at residues 473 to 492 (QFTYFQVLRVVRLIKISPAL). The Cytoplasmic portion of the chain corresponds to 493-502 (EDFVYKIFGP). The helical transmembrane segment at 503 to 530 (GKKLGSLVVFTASLLIVMSAISLQMFCF) threads the bilayer. Residues 531 to 543 (VEELDRFTTFPRA) lie on the Extracellular side of the membrane. The segment at residues 544-563 (FMSMFQILTQEGWVDVMDQT) is an intramembrane region (pore-forming). Topologically, residues 564 to 569 (LNAVGH) are extracellular. The helical transmembrane segment at 570–599 (MWAPVVAIYFILYHLFATLILLSLFVAVIL) threads the bilayer. The Cytoplasmic portion of the chain corresponds to 600-886 (DNLELDEDLK…QLYDLLGLVT (287 aa)). A disordered region spans residues 762 to 785 (QERRSLRHGSNSQRISRGKSLETL). The stretch at 795-830 (YRNAQREDSEIKMIQEKKEQAEMKRKVQEEELRENH) forms a coiled coil. The helical transmembrane segment at 887 to 906 (YLDWVMIIVTICSCISMMFE) threads the bilayer. Topologically, residues 907–915 (SPFRRVMHA) are extracellular. The chain crosses the membrane as a helical span at residues 916–939 (PTLQIAEYVFVIFMSIELNLKIMA). The Cytoplasmic portion of the chain corresponds to 940-947 (DGLFFTPT). Residues 948 to 972 (AVIRDFGGVMDIFIYLVSLIFLCWM) traverse the membrane as a helical segment. Residues 973 to 980 (PQNVPAES) lie on the Extracellular side of the membrane. Residues 981–1003 (GAQLLMVLRCLRPLRIFKLVPQM) form a helical; Voltage-sensor membrane-spanning segment. The Cytoplasmic portion of the chain corresponds to 1004-1015 (RKVVRELFSGFK). The chain crosses the membrane as a helical span at residues 1016–1039 (EIFLVSILLLTLMLVFASFGVQLF). Residues 1040–1104 (AGKLAKCNDP…NFNFDNVGNA (65 aa)) lie on the Extracellular side of the membrane. An intrachain disulfide couples C1046 to C1057. N1064 carries an N-linked (GlcNAc...) asparagine glycan. An intramembrane region (pore-forming) is located at residues 1105-1124 (MLALFEVLSLKGWVEVRDVI). Over 1125 to 1129 (IHRVG) the chain is Extracellular. The chain crosses the membrane as a helical span at residues 1130–1159 (PIHGIYIHVFVFLGCMIGLTLFVGVVIANF). Over 1160–1210 (NENKGTALLTVDQRRWEDLKSRLKIAQPLHLPPRPDNDGFRAKMYDITQHP) the chain is Cytoplasmic. The helical transmembrane segment at 1211-1227 (FFKRTIALLVLAQSVLL) threads the bilayer. Topologically, residues 1228–1236 (SVKWDVEDP) are extracellular. A helical membrane pass occupies residues 1237-1260 (VTVPLATMSVVFTFIFVLEVTMKI). Residues 1261 to 1271 (IAMSPAGFWQS) lie on the Cytoplasmic side of the membrane. Residues 1272 to 1293 (RRNRYDLLVTSLGVVWVVLHFA) form a helical membrane-spanning segment. The Extracellular portion of the chain corresponds to 1294 to 1296 (LLN). Residues 1297–1318 (AYTYMMGACVIVFRFFSICGKH) form a helical; Voltage-sensor membrane-spanning segment. The Cytoplasmic segment spans residues 1319–1331 (VTLKMLLLTVVVS). Residues 1332-1357 (MYKSFFIIVGMFLLLLCYAFAGVVLF) traverse the membrane as a helical segment. The Extracellular portion of the chain corresponds to 1358–1378 (GTVKYGENINRHANFSSAGKA). The segment at residues 1379 to 1398 (ITVLFRIVTGEDWNKIMHDC) is an intramembrane region (pore-forming). At 1399 to 1420 (MVQPPFCTPDEFTYWATDCGNY) the chain is on the extracellular side. Residues C1405 and C1417 are joined by a disulfide bond. The chain crosses the membrane as a helical span at residues 1421–1447 (AGALMYFCSFYVIIAYIMLNLLVAIIV). Residues 1448 to 1738 (ENFSLFYSTE…DESGDDLLDI (291 aa)) are Cytoplasmic-facing. The disordered stretch occupies residues 1611–1678 (PPSIETTQPS…QWRLPSAPKP (68 aa)). Positions 1613–1632 (SIETTQPSEDTNANSQDNSM) are enriched in polar residues. Residues 1633–1648 (QPETSSQQQLLSPTLS) show a composition bias toward low complexity.

It belongs to the NALCN family. Found in a complex with NALCN, UNC79, UNC80 and NACL1; these auxiliary subunits are indispensable for the function of NALCN channel. Interacts with UNC80; required for the NALCN activation/inhibition by GPCRs in neurons. Found in a complex with NALCN, UNC79 and UNC80; UNC80 bridges NALCN to UNC79. Interacts with CHRM3. Phosphorylated on tyrosine residues.

The protein localises to the cell membrane. The catalysed reaction is Na(+)(in) = Na(+)(out). Inhibited by low micromolar concentrations of Gd(3+) and high micromolar concentrations of verapamil. Insensitive to tetrodotoxin (TTX) and potentiated by low external Ca(2+) concentration. Voltage-gated ion channel responsible for the resting Na(+) permeability that controls neuronal excitability. NALCN channel functions as a multi-protein complex, which consists at least of NALCN, NALF1, UNC79 and UNC80. NALCN is the voltage-sensing, pore-forming subunit of the NALCN channel complex. NALCN channel complex is constitutively active and conducts monovalent cations but is blocked by physiological concentrations of extracellular divalent cations. In addition to its role in regulating neuronal excitability, is required for normal respiratory rhythm, systemic osmoregulation by controlling the serum sodium concentration and in the regulation of the intestinal pace-making activity in the interstitial cells of Cajal. NALCN channel is also activated by neuropeptides such as neurotensin and substance P (SP) through a SRC family kinases-dependent pathway. In addition, NALCN activity is enhanced/modulated by several GPCRs, such as CHRM3. In Homo sapiens (Human), this protein is Sodium leak channel NALCN.